Here is a 165-residue protein sequence, read N- to C-terminus: Lithostathine-1 (165 aa).

The signal sequence occupies residues 1-21 (MARNAYFILLSCLIVLSPSQG). Gln22 is modified (pyrrolidone carboxylic acid). Positions 33 to 163 (ISCPEGSNAY…DAQYSFVCKF (131 aa)) constitute a C-type lectin domain. Disulfide bonds link Cys35–Cys46, Cys63–Cys161, and Cys136–Cys153. An N-linked (GlcNAc...) asparagine glycan is attached at Asn129.

In terms of tissue distribution, expressed only in regenerating islets and normal exocrine pancreas, but not in normal pancreatic islets. Expressed strongly in pancreas, moderately in gall bladder, and weakly in liver.

The protein localises to the secreted. Functionally, might act as an inhibitor of spontaneous calcium carbonate precipitation. This Mus musculus (Mouse) protein is Lithostathine-1 (Reg1).